Reading from the N-terminus, the 207-residue chain is Interleukin-6 (207 aa).

The first 20 residues, 1–20 (MNSLSTSAFSLGLLLVMATA), serve as a signal peptide directing secretion. Cysteines 67 and 73 form a disulfide. Position 76 is a phosphoserine (Ser-76). A disulfide bridge connects residues Cys-96 and Cys-106.

Belongs to the IL-6 superfamily. Component of a hexamer of two molecules each of IL6, IL6R and IL6ST; first binds to IL6R to associate with the signaling subunit IL6ST. Interacts with IL6R (via the N-terminal ectodomain); this interaction may be affected by IL6R-binding with SORL1, hence decreasing IL6 cis signaling. Interacts with SORL1 (via the N-terminal ectodomain); this interaction leads to IL6 internalization and lysosomal degradation. May form a trimeric complex with the soluble SORL1 ectodomain and soluble IL6R receptor; this interaction might stabilize circulating IL6, hence promoting IL6 trans signaling.

It is found in the secreted. Cytokine with a wide variety of biological functions in immunity, tissue regeneration, and metabolism. Binds to IL6R, then the complex associates to the signaling subunit IL6ST/gp130 to trigger the intracellular IL6-signaling pathway. The interaction with the membrane-bound IL6R and IL6ST stimulates 'classic signaling', whereas the binding of IL6 and soluble IL6R to IL6ST stimulates 'trans-signaling'. Alternatively, 'cluster signaling' occurs when membrane-bound IL6:IL6R complexes on transmitter cells activate IL6ST receptors on neighboring receiver cells. Its function is as follows. IL6 is a potent inducer of the acute phase response. Rapid production of IL6 contributes to host defense during infection and tissue injury, but excessive IL6 synthesis is involved in disease pathology. In the innate immune response, is synthesized by myeloid cells, such as macrophages and dendritic cells, upon recognition of pathogens through toll-like receptors (TLRs) at the site of infection or tissue injury. In the adaptive immune response, is required for the differentiation of B cells into immunoglobulin-secreting cells. Plays a major role in the differentiation of CD4(+) T cell subsets. Essential factor for the development of T follicular helper (Tfh) cells that are required for the induction of germinal-center formation. Required to drive naive CD4(+) T cells to the Th17 lineage. Also required for proliferation of myeloma cells and the survival of plasmablast cells. In terms of biological role, acts as an essential factor in bone homeostasis and on vessels directly or indirectly by induction of VEGF, resulting in increased angiogenesis activity and vascular permeability. Induces, through 'trans-signaling' and synergistically with IL1B and TNF, the production of VEGF. Involved in metabolic controls, is discharged into the bloodstream after muscle contraction increasing lipolysis and improving insulin resistance. 'Trans-signaling' in central nervous system also regulates energy and glucose homeostasis. Mediates, through GLP-1, crosstalk between insulin-sensitive tissues, intestinal L cells and pancreatic islets to adapt to changes in insulin demand. Also acts as a myokine. Plays a protective role during liver injury, being required for maintenance of tissue regeneration. Also has a pivotal role in iron metabolism by regulating HAMP/hepcidin expression upon inflammation or bacterial infection. Through activation of IL6ST-YAP-NOTCH pathway, induces inflammation-induced epithelial regeneration. In Vulpes vulpes (Red fox), this protein is Interleukin-6 (IL6).